A 132-amino-acid polypeptide reads, in one-letter code: Vacuolar protein sorting-associated protein 55 homolog (132 aa).

4 consecutive transmembrane segments (helical) span residues 7 to 27 (VAAL…GCAL), 32 to 52 (TWTP…LLIA), 68 to 88 (LALF…IVLA), and 98 to 118 (CFLV…YFYL).

This sequence belongs to the OB-RGRP/VPS55 family.

It is found in the endosome membrane. In terms of biological role, involved in endosomal protein transport. This Caenorhabditis elegans protein is Vacuolar protein sorting-associated protein 55 homolog.